The following is a 509-amino-acid chain: Lysine--tRNA ligase (509 aa).

Positions 418 and 425 each coordinate Mg(2+).

The protein belongs to the class-II aminoacyl-tRNA synthetase family. In terms of assembly, homodimer. The cofactor is Mg(2+).

The protein resides in the cytoplasm. It carries out the reaction tRNA(Lys) + L-lysine + ATP = L-lysyl-tRNA(Lys) + AMP + diphosphate. The sequence is that of Lysine--tRNA ligase (lysS) from Acinetobacter baylyi (strain ATCC 33305 / BD413 / ADP1).